The primary structure comprises 242 residues: Ubiquinone/menaquinone biosynthesis C-methyltransferase UbiE (242 aa).

S-adenosyl-L-methionine contacts are provided by residues threonine 69, aspartate 87, and 114 to 115 (NA).

This sequence belongs to the class I-like SAM-binding methyltransferase superfamily. MenG/UbiE family.

It carries out the reaction a 2-demethylmenaquinol + S-adenosyl-L-methionine = a menaquinol + S-adenosyl-L-homocysteine + H(+). It catalyses the reaction a 2-methoxy-6-(all-trans-polyprenyl)benzene-1,4-diol + S-adenosyl-L-methionine = a 5-methoxy-2-methyl-3-(all-trans-polyprenyl)benzene-1,4-diol + S-adenosyl-L-homocysteine + H(+). The protein operates within quinol/quinone metabolism; menaquinone biosynthesis; menaquinol from 1,4-dihydroxy-2-naphthoate: step 2/2. It functions in the pathway cofactor biosynthesis; ubiquinone biosynthesis. Its function is as follows. Methyltransferase required for the conversion of demethylmenaquinol (DMKH2) to menaquinol (MKH2) and the conversion of 2-polyprenyl-6-methoxy-1,4-benzoquinol (DDMQH2) to 2-polyprenyl-3-methyl-6-methoxy-1,4-benzoquinol (DMQH2). This is Ubiquinone/menaquinone biosynthesis C-methyltransferase UbiE from Zymomonas mobilis subsp. mobilis (strain ATCC 31821 / ZM4 / CP4).